A 356-amino-acid polypeptide reads, in one-letter code: S-adenosylmethionine:tRNA ribosyltransferase-isomerase (356 aa).

Belongs to the QueA family. As to quaternary structure, monomer.

The protein localises to the cytoplasm. The catalysed reaction is 7-aminomethyl-7-carbaguanosine(34) in tRNA + S-adenosyl-L-methionine = epoxyqueuosine(34) in tRNA + adenine + L-methionine + 2 H(+). Its pathway is tRNA modification; tRNA-queuosine biosynthesis. Functionally, transfers and isomerizes the ribose moiety from AdoMet to the 7-aminomethyl group of 7-deazaguanine (preQ1-tRNA) to give epoxyqueuosine (oQ-tRNA). The protein is S-adenosylmethionine:tRNA ribosyltransferase-isomerase of Escherichia coli O6:H1 (strain CFT073 / ATCC 700928 / UPEC).